The following is a 117-amino-acid chain: MGRLTTHVLDTAAGTPGKDLAITLFKIVNNLRQPIKTVRTNHDGRCEAPLLEGEALQAGIYELDFAVGDYYRAAGVSLPDPAFLDVVTLRFGVADAGAHYHVPLLVSPWSYSTYRGS.

His-7, Arg-45, and Tyr-114 together coordinate substrate.

The protein belongs to the transthyretin family. 5-hydroxyisourate hydrolase subfamily. Homotetramer.

It carries out the reaction 5-hydroxyisourate + H2O = 5-hydroxy-2-oxo-4-ureido-2,5-dihydro-1H-imidazole-5-carboxylate + H(+). Functionally, catalyzes the hydrolysis of 5-hydroxyisourate (HIU) to 2-oxo-4-hydroxy-4-carboxy-5-ureidoimidazoline (OHCU). This is 5-hydroxyisourate hydrolase from Ralstonia nicotianae (strain ATCC BAA-1114 / GMI1000) (Ralstonia solanacearum).